Reading from the N-terminus, the 399-residue chain is Acetate kinase (399 aa).

Residue Asn10 participates in Mg(2+) binding. An ATP-binding site is contributed by Lys17. Position 91 (Arg91) interacts with substrate. Asp148 functions as the Proton donor/acceptor in the catalytic mechanism. ATP contacts are provided by residues His208–Gly212, Asp283–Arg285, and Gly331–Asn335. A Mg(2+)-binding site is contributed by Glu385.

Belongs to the acetokinase family. In terms of assembly, homodimer. It depends on Mg(2+) as a cofactor. The cofactor is Mn(2+).

The protein resides in the cytoplasm. The catalysed reaction is acetate + ATP = acetyl phosphate + ADP. It functions in the pathway metabolic intermediate biosynthesis; acetyl-CoA biosynthesis; acetyl-CoA from acetate: step 1/2. In terms of biological role, catalyzes the formation of acetyl phosphate from acetate and ATP. Can also catalyze the reverse reaction. In Shewanella amazonensis (strain ATCC BAA-1098 / SB2B), this protein is Acetate kinase.